Reading from the N-terminus, the 271-residue chain is MSLKKSPFFELRSGSVDTLLFIVKTADLDALRAELVKRFEATPEFFADDVVAIDVRRLADNERVPLDDIRGMLSDVRMRAIGVVAQPEQHAWAAGAGLPLLEARDRRAPSPKAADDAPAQPEEPRVPAAGQAALFAQAGPSGADAVAPPAVAAAPVVAAQSATLVIDKPLRSGQQIYAKGDLVVLGPVSYGAEVIAEGNIHIYAPLRGRALAGVHGNHDARIFCTCLEPELISIAGIYRTTENPLPADVLGKSVQIRLEQEKLMIEPLRLT.

A disordered region spans residues 106 to 125 (RRAPSPKAADDAPAQPEEPR). Over residues 110–119 (SPKAADDAPA) the composition is skewed to low complexity.

The protein belongs to the MinC family. As to quaternary structure, interacts with MinD and FtsZ.

Its function is as follows. Cell division inhibitor that blocks the formation of polar Z ring septums. Rapidly oscillates between the poles of the cell to destabilize FtsZ filaments that have formed before they mature into polar Z rings. Prevents FtsZ polymerization. The polypeptide is Probable septum site-determining protein MinC (Burkholderia thailandensis (strain ATCC 700388 / DSM 13276 / CCUG 48851 / CIP 106301 / E264)).